Reading from the N-terminus, the 336-residue chain is Ketol-acid reductoisomerase (NADP(+)) (336 aa).

Residues 1 to 181 (MKVYYDQDAD…GGGRSGIIET (181 aa)) enclose the KARI N-terminal Rossmann domain. NADP(+) is bound by residues 24-27 (YGSQ), Arg-47, Ser-50, and Ser-52. The active site involves His-107. Gly-133 serves as a coordination point for NADP(+). The KARI C-terminal knotted domain maps to 182–327 (SFREETETDL…ERLRGMMPWI (146 aa)). Mg(2+)-binding residues include Asp-190, Glu-194, Glu-226, and Glu-230. Position 251 (Ser-251) interacts with substrate.

Belongs to the ketol-acid reductoisomerase family. Requires Mg(2+) as cofactor.

The enzyme catalyses (2R)-2,3-dihydroxy-3-methylbutanoate + NADP(+) = (2S)-2-acetolactate + NADPH + H(+). It catalyses the reaction (2R,3R)-2,3-dihydroxy-3-methylpentanoate + NADP(+) = (S)-2-ethyl-2-hydroxy-3-oxobutanoate + NADPH + H(+). Its pathway is amino-acid biosynthesis; L-isoleucine biosynthesis; L-isoleucine from 2-oxobutanoate: step 2/4. The protein operates within amino-acid biosynthesis; L-valine biosynthesis; L-valine from pyruvate: step 2/4. Its function is as follows. Involved in the biosynthesis of branched-chain amino acids (BCAA). Catalyzes an alkyl-migration followed by a ketol-acid reduction of (S)-2-acetolactate (S2AL) to yield (R)-2,3-dihydroxy-isovalerate. In the isomerase reaction, S2AL is rearranged via a Mg-dependent methyl migration to produce 3-hydroxy-3-methyl-2-ketobutyrate (HMKB). In the reductase reaction, this 2-ketoacid undergoes a metal-dependent reduction by NADPH to yield (R)-2,3-dihydroxy-isovalerate. The polypeptide is Ketol-acid reductoisomerase (NADP(+)) (Halorhodospira halophila (strain DSM 244 / SL1) (Ectothiorhodospira halophila (strain DSM 244 / SL1))).